A 128-amino-acid polypeptide reads, in one-letter code: S-protein homolog 5 (128 aa).

The signal sequence occupies residues 1–20 (MEKVSIVCFFFFLLFGSGYG).

This sequence belongs to the plant self-incompatibility (S1) protein family.

The protein resides in the secreted. This Arabidopsis thaliana (Mouse-ear cress) protein is S-protein homolog 5.